Here is a 133-residue protein sequence, read N- to C-terminus: UPF0134 protein MPN_151 (133 aa).

Belongs to the UPF0134 family.

In Mycoplasma pneumoniae (strain ATCC 29342 / M129 / Subtype 1) (Mycoplasmoides pneumoniae), this protein is UPF0134 protein MPN_151.